The sequence spans 323 residues: Pyruvate dehydrogenase E1 component subunit beta (323 aa).

E60 is a thiamine diphosphate binding site. The K(+) site is built by I113, A161, I162, D164, and N166.

As to quaternary structure, heterodimer of an alpha and a beta chain. It depends on thiamine diphosphate as a cofactor.

It localises to the plastid. Its subcellular location is the chloroplast. The enzyme catalyses N(6)-[(R)-lipoyl]-L-lysyl-[protein] + pyruvate + H(+) = N(6)-[(R)-S(8)-acetyldihydrolipoyl]-L-lysyl-[protein] + CO2. Functionally, the pyruvate dehydrogenase complex catalyzes the overall conversion of pyruvate to acetyl-CoA and CO(2). It contains multiple copies of three enzymatic components: pyruvate dehydrogenase (E1), dihydrolipoamide acetyltransferase (E2) and lipoamide dehydrogenase (E3). This Gracilaria tenuistipitata var. liui (Red alga) protein is Pyruvate dehydrogenase E1 component subunit beta (pdhB).